Reading from the N-terminus, the 362-residue chain is MSTIIVSSPVTAGLASRFKAHGLKLKTVVLFDTNTRKLFGEQVLRTLADEGFMVHELVVPAREASKSFSTAYKLYGGMIEAGVDRSWNLLAVGGGVVGDLGGFIAASYYRGIPVIQLPTTLLAMTDSSIGGKVAINHPLGKNLIGFFHLPELVLIDPSYLGTLPEREVYSGLSEVVKYGFIADSALLERLRSHFSSIVALEEPYLTDAIRRSAEIKEAVVREDFREMSGLRATLNFGHTFAHGLEKLADYRFIRHGEAVTIGMAAALSLSRRLGFLDRPSLEQGQSIIAEFRFPRGLLKKRFLDIDAPALLENMLSDKKKLDSRLRFVLLKALGEAFLLEEDVDDREVLGAIEDAKTFFRKQ.

NAD(+) is bound by residues 95–99 (GVVGD), 119–120 (TT), K132, and K141. Zn(2+)-binding residues include E174, H238, and H255.

This sequence belongs to the sugar phosphate cyclases superfamily. Dehydroquinate synthase family. Co(2+) serves as cofactor. Zn(2+) is required as a cofactor. It depends on NAD(+) as a cofactor.

It localises to the cytoplasm. It carries out the reaction 7-phospho-2-dehydro-3-deoxy-D-arabino-heptonate = 3-dehydroquinate + phosphate. It participates in metabolic intermediate biosynthesis; chorismate biosynthesis; chorismate from D-erythrose 4-phosphate and phosphoenolpyruvate: step 2/7. Catalyzes the conversion of 3-deoxy-D-arabino-heptulosonate 7-phosphate (DAHP) to dehydroquinate (DHQ). This is 3-dehydroquinate synthase from Chlorobium luteolum (strain DSM 273 / BCRC 81028 / 2530) (Pelodictyon luteolum).